A 789-amino-acid polypeptide reads, in one-letter code: Cadherin-6 (789 aa).

The first 18 residues, 1-18 (MRTYRYFLLLFWVGQPYP), serve as a signal peptide directing secretion. A propeptide spanning residues 19-53 (TFSNPLSKRTSGFPAKRRALELSANSRNELSRSKR) is cleaved from the precursor. Cadherin domains lie at 54-159 (SWMW…EPIF), 160-268 (TKDV…PPRF), 269-383 (PQST…PPVF), 384-486 (SKPA…DNAP), and 487-608 (EFAE…LIHP). The Extracellular segment spans residues 54-615 (SWMWNQFFLL…IHPTGLSTGA (562 aa)). Asn-255 is a glycosylation site (N-linked (GlcNAc...) asparagine). A disordered region spans residues 259-288 (TDVNDNPPRFPQSTYQFKTPESSPPGTPIG). Polar residues predominate over residues 269–279 (PQSTYQFKTPE). Asn-399, Asn-437, Asn-455, and Asn-536 each carry an N-linked (GlcNAc...) asparagine glycan. The chain crosses the membrane as a helical span at residues 616–636 (LVAILLCIVILLVTVVLFAAL). At 637–789 (RRQRKKEPLI…YGGMDSDKDS (153 aa)) the chain is on the cytoplasmic side. Phosphoserine occurs at positions 785 and 789.

Highly expressed in kidney and brain.

Its subcellular location is the cell membrane. In terms of biological role, cadherins are calcium-dependent cell adhesion proteins. They preferentially interact with themselves in a homophilic manner in connecting cells; cadherins may thus contribute to the sorting of heterogeneous cell types. The chain is Cadherin-6 (Cdh6) from Rattus norvegicus (Rat).